Reading from the N-terminus, the 81-residue chain is Cortexin-2 (81 aa).

A helical transmembrane segment spans residues 29–49 (TGFAFVGILCIFLGLLIIRCF).

Belongs to the cortexin family.

The protein resides in the membrane. In Mus musculus (Mouse), this protein is Cortexin-2 (Ctxn2).